Consider the following 294-residue polypeptide: Thymidylate synthase (294 aa).

Residues Arg-30 and 156-157 (RR) contribute to the dUMP site. Cys-176 (nucleophile) is an active-site residue. Residues 196–199 (RSGD), Asn-207, and 237–239 (HVY) each bind dUMP. Asp-199 serves as a coordination point for (6R)-5,10-methylene-5,6,7,8-tetrahydrofolate. Ala-293 lines the (6R)-5,10-methylene-5,6,7,8-tetrahydrofolate pocket.

Belongs to the thymidylate synthase family. Homodimer.

It catalyses the reaction dUMP + (6R)-5,10-methylene-5,6,7,8-tetrahydrofolate = 7,8-dihydrofolate + dTMP. Its pathway is pyrimidine metabolism; dTTP biosynthesis. The polypeptide is Thymidylate synthase (Ascaris suum (Pig roundworm)).